We begin with the raw amino-acid sequence, 1068 residues long: Carbamoyl phosphate synthase large chain (1068 aa).

The carboxyphosphate synthetic domain stretch occupies residues 1–401; sequence MPLNKDIKKV…AFLKGTRSLE (401 aa). R129, R169, G175, G176, K208, V210, E215, G241, I242, H243, Q284, and E298 together coordinate ATP. The ATP-grasp 1 domain maps to 133-327; it reads RNVMSRINGP…IAKVASKIAL (195 aa). Residues Q284, E298, and N300 each coordinate Mg(2+). Mn(2+) contacts are provided by Q284, E298, and N300. Positions 402–549 are oligomerization domain; the sequence is IGKYSLEHKK…YSTYDVYDEV (148 aa). Positions 550–932 are carbamoyl phosphate synthetic domain; that stretch reads EVSKNKKVIV…ALYKGFIGAN (383 aa). The 191-residue stretch at 674-864 folds into the ATP-grasp 2 domain; it reads DELLEKLKIA…IVDIATRVML (191 aa). Residues R710, K749, L751, E755, G780, V781, H782, S783, Q823, and E835 each coordinate ATP. Mg(2+)-binding residues include Q823, E835, and N837. Residues Q823, E835, and N837 each contribute to the Mn(2+) site. The 136-residue stretch at 933 to 1068 folds into the MGS-like domain; the sequence is MSIKKEKGTV…ETLYIFDLSN (136 aa). Residues 933–1068 form an allosteric domain region; it reads MSIKKEKGTV…ETLYIFDLSN (136 aa).

The protein belongs to the CarB family. Composed of two chains; the small (or glutamine) chain promotes the hydrolysis of glutamine to ammonia, which is used by the large (or ammonia) chain to synthesize carbamoyl phosphate. Tetramer of heterodimers (alpha,beta)4. Mg(2+) is required as a cofactor. Requires Mn(2+) as cofactor.

It catalyses the reaction hydrogencarbonate + L-glutamine + 2 ATP + H2O = carbamoyl phosphate + L-glutamate + 2 ADP + phosphate + 2 H(+). The catalysed reaction is hydrogencarbonate + NH4(+) + 2 ATP = carbamoyl phosphate + 2 ADP + phosphate + 2 H(+). It functions in the pathway amino-acid biosynthesis; L-arginine biosynthesis; carbamoyl phosphate from bicarbonate: step 1/1. Its pathway is pyrimidine metabolism; UMP biosynthesis via de novo pathway; (S)-dihydroorotate from bicarbonate: step 1/3. Large subunit of the glutamine-dependent carbamoyl phosphate synthetase (CPSase). CPSase catalyzes the formation of carbamoyl phosphate from the ammonia moiety of glutamine, carbonate, and phosphate donated by ATP, constituting the first step of 2 biosynthetic pathways, one leading to arginine and/or urea and the other to pyrimidine nucleotides. The large subunit (synthetase) binds the substrates ammonia (free or transferred from glutamine from the small subunit), hydrogencarbonate and ATP and carries out an ATP-coupled ligase reaction, activating hydrogencarbonate by forming carboxy phosphate which reacts with ammonia to form carbamoyl phosphate. This Clostridium botulinum (strain Kyoto / Type A2) protein is Carbamoyl phosphate synthase large chain.